The primary structure comprises 89 residues: Small ribosomal subunit protein uS15 (89 aa).

The protein belongs to the universal ribosomal protein uS15 family. As to quaternary structure, part of the 30S ribosomal subunit. Forms a bridge to the 50S subunit in the 70S ribosome, contacting the 23S rRNA.

Its function is as follows. One of the primary rRNA binding proteins, it binds directly to 16S rRNA where it helps nucleate assembly of the platform of the 30S subunit by binding and bridging several RNA helices of the 16S rRNA. In terms of biological role, forms an intersubunit bridge (bridge B4) with the 23S rRNA of the 50S subunit in the ribosome. This Coxiella burnetii (strain CbuK_Q154) (Coxiella burnetii (strain Q154)) protein is Small ribosomal subunit protein uS15.